Reading from the N-terminus, the 356-residue chain is Probable D-xylulose reductase A (356 aa).

Zn(2+)-binding residues include Cys-45, His-70, and Glu-71. Residue 180–185 (GAGPVG) coordinates NAD(+).

Belongs to the zinc-containing alcohol dehydrogenase family. It depends on Zn(2+) as a cofactor.

The enzyme catalyses xylitol + NAD(+) = D-xylulose + NADH + H(+). It functions in the pathway carbohydrate degradation; L-arabinose degradation via L-arabinitol; D-xylulose 5-phosphate from L-arabinose (fungal route): step 4/5. Its function is as follows. Xylitol dehydrogenase which catalyzes the conversion of xylitol to D-xylulose. Xylose is a major component of hemicelluloses such as xylan. Most fungi utilize D-xylose via three enzymatic reactions, xylose reductase (XR), xylitol dehydrogenase (XDH), and xylulokinase, to form xylulose 5-phosphate, which enters pentose phosphate pathway. The chain is Probable D-xylulose reductase A (xdhA) from Arthroderma otae (strain ATCC MYA-4605 / CBS 113480) (Microsporum canis).